The chain runs to 513 residues: Lysine--tRNA ligase (513 aa).

2 residues coordinate Mg(2+): glutamate 423 and glutamate 430.

Belongs to the class-II aminoacyl-tRNA synthetase family. In terms of assembly, homodimer. Requires Mg(2+) as cofactor.

Its subcellular location is the cytoplasm. The catalysed reaction is tRNA(Lys) + L-lysine + ATP = L-lysyl-tRNA(Lys) + AMP + diphosphate. The chain is Lysine--tRNA ligase from Anaeromyxobacter dehalogenans (strain 2CP-C).